We begin with the raw amino-acid sequence, 315 residues long: Acetyl-coenzyme A carboxylase carboxyl transferase subunit alpha (315 aa).

Residues 40-293 enclose the CoA carboxyltransferase C-terminal domain; sequence LEDKKIALTK…KKNVLAALDR (254 aa).

The protein belongs to the AccA family. As to quaternary structure, acetyl-CoA carboxylase is a heterohexamer composed of biotin carboxyl carrier protein (AccB), biotin carboxylase (AccC) and two subunits each of ACCase subunit alpha (AccA) and ACCase subunit beta (AccD).

It localises to the cytoplasm. It carries out the reaction N(6)-carboxybiotinyl-L-lysyl-[protein] + acetyl-CoA = N(6)-biotinyl-L-lysyl-[protein] + malonyl-CoA. It participates in lipid metabolism; malonyl-CoA biosynthesis; malonyl-CoA from acetyl-CoA: step 1/1. Component of the acetyl coenzyme A carboxylase (ACC) complex. First, biotin carboxylase catalyzes the carboxylation of biotin on its carrier protein (BCCP) and then the CO(2) group is transferred by the carboxyltransferase to acetyl-CoA to form malonyl-CoA. The polypeptide is Acetyl-coenzyme A carboxylase carboxyl transferase subunit alpha (Marinomonas sp. (strain MWYL1)).